Reading from the N-terminus, the 175-residue chain is Shikimate kinase (175 aa).

17 to 22 (GAGKST) serves as a coordination point for ATP. S21 contributes to the Mg(2+) binding site. Positions 39, 63, and 85 each coordinate substrate. R123 is an ATP binding site. A substrate-binding site is contributed by R142. Q159 lines the ATP pocket.

Belongs to the shikimate kinase family. Monomer. Mg(2+) is required as a cofactor.

It localises to the cytoplasm. It carries out the reaction shikimate + ATP = 3-phosphoshikimate + ADP + H(+). The protein operates within metabolic intermediate biosynthesis; chorismate biosynthesis; chorismate from D-erythrose 4-phosphate and phosphoenolpyruvate: step 5/7. Its function is as follows. Catalyzes the specific phosphorylation of the 3-hydroxyl group of shikimic acid using ATP as a cosubstrate. This chain is Shikimate kinase, found in Photobacterium profundum (strain SS9).